Consider the following 169-residue polypeptide: Ribosome maturation factor RimM (169 aa).

The PRC barrel domain maps to G93–L166.

The protein belongs to the RimM family. As to quaternary structure, binds ribosomal protein uS19.

Its subcellular location is the cytoplasm. In terms of biological role, an accessory protein needed during the final step in the assembly of 30S ribosomal subunit, possibly for assembly of the head region. Essential for efficient processing of 16S rRNA. May be needed both before and after RbfA during the maturation of 16S rRNA. It has affinity for free ribosomal 30S subunits but not for 70S ribosomes. This is Ribosome maturation factor RimM from Exiguobacterium sibiricum (strain DSM 17290 / CCUG 55495 / CIP 109462 / JCM 13490 / 255-15).